The sequence spans 571 residues: Proline--tRNA ligase (571 aa).

Belongs to the class-II aminoacyl-tRNA synthetase family. ProS type 1 subfamily. In terms of assembly, homodimer.

The protein resides in the cytoplasm. The catalysed reaction is tRNA(Pro) + L-proline + ATP = L-prolyl-tRNA(Pro) + AMP + diphosphate. Catalyzes the attachment of proline to tRNA(Pro) in a two-step reaction: proline is first activated by ATP to form Pro-AMP and then transferred to the acceptor end of tRNA(Pro). As ProRS can inadvertently accommodate and process non-cognate amino acids such as alanine and cysteine, to avoid such errors it has two additional distinct editing activities against alanine. One activity is designated as 'pretransfer' editing and involves the tRNA(Pro)-independent hydrolysis of activated Ala-AMP. The other activity is designated 'posttransfer' editing and involves deacylation of mischarged Ala-tRNA(Pro). The misacylated Cys-tRNA(Pro) is not edited by ProRS. This Acinetobacter baumannii (strain AB307-0294) protein is Proline--tRNA ligase.